We begin with the raw amino-acid sequence, 465 residues long: WAS protein family homolog 2 (465 aa).

The tract at residues 1 to 54 (MTPVRMQHSLAGQTYAVPLIQPDLRREEAVQQMADALQYLQKVSGDIFSRISQQ) is required for WASH complex assembly. The interval 1 to 167 (MTPVRMQHSL…EGLGGLPSNI (167 aa)) is WHD1. K220 is covalently cross-linked (Glycyl lysine isopeptide (Lys-Gly) (interchain with G-Cter in ubiquitin)). 2 disordered regions span residues 297 to 407 (QDGV…QGGH) and 422 to 465 (GISG…DWES). Pro residues predominate over residues 302–314 (TPPPPPPPPPPAP). Residues 349–465 (QGAPREVVDP…AEEDEDDWES (117 aa)) form a VCA region. One can recognise a WH2 domain in the interval 361–383 (GRATLLESIRQAGGIGKAKLRSM). Basic and acidic residues predominate over residues 382 to 398 (SMKERKLEKKKQKEQEQ). The segment covering 424-436 (SGKGPGAGEGPGG) has biased composition (gly residues). The span at 456-465 (AEEDEDDWES) shows a compositional bias: acidic residues.

Belongs to the WASH1 family. Component of the WASH core complex also described as WASH regulatory complex (SHRC) composed of WASH (WASHC1, WASH2P or WASH3P), WASHC2 (WASHC2A or WASHC2C), WASHC3, WASHC4 and WASHC5. The WASH core complex associates with the F-actin-capping protein dimer (formed by CAPZA1, CAPZA2 or CAPZA3 and CAPZB) in a transient or substoichiometric manner which was initially described as WASH complex. Interacts (via WHD1 region) with WASHC2C; the interaction is direct. Interacts with alpha-tubulin. Interacts with BECN1; WASHC1 and AMBRA1 can competitively interact with BECN1. Interacts with BLOC1S2; may associate with the BLOC-1 complex. Interacts with tubulin gamma chain (TUBG1 or TUBG2). Interacts with EXOC1, EXOC4, EXOC8; in MMP14-positive endosomes in breast tumor cells; indicative for an association with the exocyst complex.

The protein localises to the early endosome membrane. It is found in the recycling endosome membrane. The protein resides in the late endosome. Its subcellular location is the cytoplasmic vesicle. It localises to the autophagosome. The protein localises to the cytoplasm. It is found in the cytoskeleton. The protein resides in the microtubule organizing center. Its subcellular location is the centrosome. It localises to the centriole. Functionally, acts as a nucleation-promoting factor at the surface of endosomes, where it recruits and activates the Arp2/3 complex to induce actin polymerization, playing a key role in the fission of tubules that serve as transport intermediates during endosome sorting. Involved in endocytic trafficking of EGF. Involved in transferrin receptor recycling. Regulates the trafficking of endosomal alpha5beta1 integrin to the plasma membrane and involved in invasive cell migration. In T-cells involved in endosome-to-membrane recycling of receptors including T-cell receptor (TCR), CD28 and ITGAL; proposed to be implicated in T-cell proliferation and effector function. In dendritic cells involved in endosome-to-membrane recycling of major histocompatibility complex (MHC) class II probably involving retromer and subsequently allowing antigen sampling, loading and presentation during T-cell activation. Involved in Arp2/3 complex-dependent actin assembly driving Salmonella typhimurium invasion independent of ruffling. Involved in the exocytosis of MMP14 leading to matrix remodeling during invasive migration and implicating late endosome-to-plasma membrane tubular connections and cooperation with the exocyst complex. Involved in negative regulation of autophagy independently from its role in endosomal sorting by inhibiting BECN1 ubiquitination to inactivate PIK3C3/Vps34 activity. The sequence is that of WAS protein family homolog 2 (WASH2P) from Homo sapiens (Human).